The chain runs to 719 residues: Pesticidal crystal protein Cry1Ib (719 aa).

Belongs to the delta endotoxin family.

In terms of biological role, promotes colloidosmotic lysis by binding to the midgut epithelial cells of certain coleopteran and lepidopteran species. Active on Plutella xylostella but not on Bombyx mori. This is Pesticidal crystal protein Cry1Ib (cry1Ib) from Bacillus thuringiensis subsp. entomocidus.